We begin with the raw amino-acid sequence, 671 residues long: Anti-sigma-I factor RsgI2 (671 aa).

Over 1–57 (MSHYTGIILKLESDRAIVLTDGLDFMELKLKPGMQRGQHVIFDESDLYSAGLITRYK) the chain is Cytoplasmic. Residues 4–51 (YTGIILKLESDRAIVLTDGLDFMELKLKPGMQRGQHVIFDESDLYSAG) form the RsgI N-terminal anti-sigma domain. The chain crosses the membrane as a helical span at residues 58–78 (SIIMPFSAFAAAAAVFLVILF). Over 79–671 (SLRFVSISQE…SGTLYWGIEP (593 aa)) the chain is Extracellular. 2 disordered regions span residues 290–323 (TEAQPVDIPKSSPTPASFTAHVPTPPKTPSIPHT) and 359–505 (PVPV…APTE). Over residues 359-379 (PVPVSTPKPVSTPAYSSTPTP) the composition is skewed to low complexity. A compositionally biased stretch (pro residues) spans 380–400 (ESTPVPVSTPKPASTPTPAST). Residues 401 to 425 (PKPVSTPTHVSTPKPISTPTSTPRP) are compositionally biased toward low complexity. Residues 426–446 (ASTPKPTSTPTPESTPKPTST) show a composition bias toward pro residues. Residues 447–491 (PAPVSTPTSTPIPTYTSTPASTPIPAYTSTPTSIPTLTPATSPAP) are compositionally biased toward low complexity. Over residues 492–502 (TSSPTPIPSPA) the composition is skewed to pro residues. The CBM3 domain maps to 508-671 (LLTKIELQAY…SGTLYWGIEP (164 aa)). Threonine 554, aspartate 556, aspartate 637, serine 640, and aspartate 641 together coordinate Ca(2+).

Interacts (via RsgI N-terminal anti-sigma domain) with SigI2.

It is found in the cell membrane. Functionally, anti-sigma factor for SigI2. Negatively regulates SigI2 activity through direct interaction. Binding of the polysaccharide substrate to the extracellular C-terminal sensing domain of RsgI2 may induce a conformational change in its N-terminal cytoplasmic region, leading to the release and activation of SigI2. The chain is Anti-sigma-I factor RsgI2 from Acetivibrio thermocellus (strain ATCC 27405 / DSM 1237 / JCM 9322 / NBRC 103400 / NCIMB 10682 / NRRL B-4536 / VPI 7372) (Clostridium thermocellum).